A 371-amino-acid chain; its full sequence is Phosphate acyltransferase (371 aa).

This sequence belongs to the PlsX family. In terms of assembly, homodimer. Probably interacts with PlsY.

It is found in the cytoplasm. It catalyses the reaction a fatty acyl-[ACP] + phosphate = an acyl phosphate + holo-[ACP]. Its pathway is lipid metabolism; phospholipid metabolism. Functionally, catalyzes the reversible formation of acyl-phosphate (acyl-PO(4)) from acyl-[acyl-carrier-protein] (acyl-ACP). This enzyme utilizes acyl-ACP as fatty acyl donor, but not acyl-CoA. The protein is Phosphate acyltransferase of Polaromonas sp. (strain JS666 / ATCC BAA-500).